We begin with the raw amino-acid sequence, 230 residues long: Ureidoacrylate amidohydrolase RutB (230 aa).

The Proton acceptor role is filled by D24. K133 is an active-site residue. C166 (nucleophile) is an active-site residue.

This sequence belongs to the isochorismatase family. RutB subfamily.

The catalysed reaction is (Z)-3-ureidoacrylate + H2O + H(+) = (Z)-3-aminoacrylate + NH4(+) + CO2. It carries out the reaction (Z)-3-ureidoacrylate + H2O = (Z)-3-aminoacrylate + carbamate + H(+). It catalyses the reaction (Z)-2-methylureidoacrylate + H2O + H(+) = (Z)-2-methylaminoacrylate + NH4(+) + CO2. Functionally, hydrolyzes ureidoacrylate to form aminoacrylate and carbamate. The carbamate hydrolyzes spontaneously, thereby releasing one of the nitrogen atoms of the pyrimidine ring as ammonia and one of its carbon atoms as CO2. The chain is Ureidoacrylate amidohydrolase RutB from Escherichia coli O81 (strain ED1a).